A 377-amino-acid chain; its full sequence is Probable multidrug ABC transporter permease YbhS (377 aa).

At 1–28 (MSNPILSWRRVRALCVKETRQIVRDPSS) the chain is on the cytoplasmic side. A helical membrane pass occupies residues 29–49 (WLIAVVIPLLLLFIFGYGINL). The Periplasmic segment spans residues 50–181 (DSSKLRVGIL…WFNPAAISQH (132 aa)). Positions 145–375 (IWQIWQMQRA…GLTWLKTKRR (231 aa)) constitute an ABC transmembrane type-2 domain. The chain crosses the membrane as a helical span at residues 182–202 (FIIPGAVTIIMTVIGAILTSL). Topologically, residues 203–234 (VVAREWERGTMEALLSTEITRTELLLCKLIPY) are cytoplasmic. The helical transmembrane segment at 235–255 (YFLGMLAMLLCMLVSVFILGV) threads the bilayer. The Periplasmic portion of the chain corresponds to 256-261 (PYRGSL). A helical membrane pass occupies residues 262-282 (LILFFISSLFLLSTLGMGLLI). Over 283–291 (STITRNQFN) the chain is Cytoplasmic. A helical membrane pass occupies residues 292–312 (AAQVALNAAFLPSIMLSGFIF). Topologically, residues 313–345 (QIDSMPAVIRAVTYIIPARYFVSTLQSLFLAGN) are periplasmic. The chain crosses the membrane as a helical span at residues 346–366 (IPVVLVVNVLFLIASAVMFIG). The Cytoplasmic portion of the chain corresponds to 367 to 377 (LTWLKTKRRLD).

Belongs to the ABC-2 integral membrane protein family. In terms of assembly, the complex is probably composed of two ATP-binding proteins (YbhF) and two transmembrane proteins (YbhR and YbhS).

The protein localises to the cell inner membrane. Its function is as follows. Part of the ABC transporter complex YbhFSR that could be involved in efflux of cefoperazone. Probably involved in the translocation of the substrate across the membrane. This is Probable multidrug ABC transporter permease YbhS (ybhS) from Escherichia coli O157:H7.